The chain runs to 4621 residues: MFRIGRRQLWKQSVTRVLTQRLKEEKEAKRARLDGRHDYLFAIVASCLDLNKPEVEDALLEGNQIERMDQLFAVGGLRHLMFYYQDVEGAEAGHCGSSGGVNPASGKMKKPKVFVTEGKDVALMGACVFFIRSDPSKAITPENIHREVSFNTLDTADGGLLNSVRRLLSDIFIPALRASSHGWGELEGLQDASSIRQEFLSSLEGFVGILSGAQNSLKEKVNLQKCDIIELKSLKEPTDYLALASNPETVEKVECCMRVWIKQMEQILAENSQLRKEADDVGPRAELEHWKQRLSRFNYLLDQLKSPDVKAALALLAAAKSKLLKVWRDTDIRITDAANEAKDNVKYLYTLEKCCDPLYSSDPVTMIDAIPTLINAIKMVYSISHYYNTSEKITSLFVKVTNQMISACKAHITNNGTATIWSQPQEIVMQKIAAVIKLKQGYQSCFQETKQKLKQNPSEKQFDFSEMYIFGKFETFHRRLAKIMDIFTTFKTYSVLQDSKIEGLEDMATKYQDIVAAIKKKEYNFLDQREMDFDQDYEEFCKRINELHNDLQRFMDITFEKIPSTRQALSTLKKFERLNIPNLGIEEKYQIIFQNFATDIDTISKLYTKQKYDPPLARNQPPIAGKILWARQLFHRLEQPMQLFQQHPFVLRTAEAKPVIRSYNRIAKVLLEFEVLYHRAWLQQIEEIHAGLEASLLVKAPGTGELFVNFDPQILVLFRETQCMSQLGLPVSPFAAALFQKRDMFKKNFSDMKMMLSEYERVKLKMPPAIEQLMFPHLARVDEALQPGLAVLTWTSLNIGGYLENAFAKIKDLELLLDRVNDLIEFRIHAILEEMSSMALCQLPQDDPLTCEEFLQMTKDLCVSGAQLLHFKSSLVEEAVNELINMLLDVDVPPEEAAENVCHENASPSGNTSGRREGHSEALASSFNAGASSLPLTATARKKKETEVLEEARELLSHFNHQNTDALLKVTRNTLEAIRRRIHFSHMINFRDSNDASKAKQNHLPIFRASVTLAIPNIAMTPALEDIQQTLNKAVECIISVPKGVRQWSSELLSKRKMHERKMAAVKNNEDSDSDAEVEENELQETLEIASINLPIPVQTQNYYKNISDNKEIVKLVSVLSTVISSTKKEVITSMDRFKRYNHIWQKEKEDTIMTFIAQNPLLPEFESRILYFQSLEQEINAEPEYIRVGSIALYTADLKLSLTAETKAWMAVIGRHCNRKYRAEMENILTVVEESQKKLSRPIKDLDDIRIAMAALKEIREQQISTDFQVGPIEESYALLNKYGLLVAKEEMDKVDTLRYAWEKLLARASDVQNELGALQPSFRKELISTVEVFLQDCQQFYLDYDLNGPMASGLKPQEASGRLIIFQNQFDNIYRKYITYTGGEELFGLPVTPYPQLLEIKRQLNLLQKIYSLYNNVIETVNSYQDTLWSDVNIEKINNELLEFQNRCRKLPRALKDWQAFLDLKKTIDDFSECCPLLEYMASNAMVERHWQRITALTGHSLDVGNETFKLRNIMEAPLLKYKEEIEDICISAVKERDIEQKLRQVINEWDNKTLTFSGFKTRGELLLRGDSTSEVIASMEDSLMLLGSLLSNRYNMPFKAQIQKWVQCLSNSTDIIENWMTVQNLWIYLEAVFVGGDIAKQLPKEAKRFSNIDKSWVKIMTRAHEIPNVVQCCVGDETMGQLLPHLLDQLEICQKSLTGYLEKKRLCFPRFFFVSDPALLEILGQASDSHTIQAHLLNVFDNIKTVKFHDKIYDRILSISSREGETIELDKPVMAEGNVEVWLNSLLEESQSSLHLVIRQAAANIQEPGFQLIEFLSSFPAQVGLLGIQMLWTRDSEEALRNAKFDKKIMQKTNQAFLELLNMLIEITTKDLSSMERVKYETLITIHVHQRDIFDDLCHMHVKSPTDFEWLKQCRFYFKEDSDKTMIHITDVAFIYQNEFLGCTDRLVITPLTDRCYITLAQALGMSMGGAPAGPAGTGKTETTKDMGRCLGKYVVVFNCSDQMDFRGLGRIFKGLAQSGSWGCFDEFNRIDLPVLSVAAQQISIILTCKKEHKKSFIFTDGDNVTMNPEFGLFLTMNPGYAGRQELPENLKINFRSVAMMVPDRQIIIRVKLASCGFIDNVVLARKFFTLYQLCEEQLSKQVHYDFGLRNILSVLRTLGAAKRASPTDTESTIVMRVLRDMNLSKLIDEDEPLFLSLIEDLFPNILLDKAGYPELETAISKQVEEAGLINHPPWKLKVIQLFETQRVRHGMMTLGPSGSGKTTCIHTLMKAMTDCGKPHREMRMNPKAITAPQMFGRLDVATNDWTDGIFSTLWRKTLKAKKGEHIWIVLDGPVDAIWIENLNSVLDDNKTLTLANGDRIPMAPNCKIVFEPHNIDNASPATVSRNGMVFMSSSVLDWSPILEGFLKRRSPQEAEILRQLYAETFPDLYRFSIQNLEFKMEVLEAFVITQSTHMLQGLIPPKEQAGEVDPEHLGRLFVFAMMWSVGAVLELEGRRRMELWLRSREGPTLHLPQLTDAGDTMFDYYVAPNGTWRHWSLCTPEYVYPPDTTPEYGSILVPNVDNVRTDFLIKTIAKQGKAVLLIGEQGTAKTVIIKGFMSKFDPESHMVKNLNFSSATTPVMFQRTIESYVDKRMGTTYGPPAGKKMAVFIDDLNMPVINEWGDQVTNEIVRQLMEQSGFYNLEKPGEFTSIVDIQFLAAMIHPGGGRNDIPQRLKRQFSIFNCTLPSDASMDKIFGVIGAGYYCAQRGFSEEVQDALIKLVPLTRRLWQMTKLKMLPTPAKFHYVFNLRDLSRIWQGMLNITSEVIKDTDELLRLWKHECKRVIADRFSMSSDVTWFDKAVVSLVEEEFGEEKAPVVDCGVDAYFVDFLRDAPEATGETPEEADAEMPKLYEPIASLNHLRERLSVFLQLYNESIRGTGMDMVFFIDAMVHLVKISRVIRTPRGNALLVGVGGSGKQSLTRLASFIAGYTSFQITLTRSYNTSNLMEDLKVLYRTAGQQGKGITFIFTDNEIKEESFLEYMNNVLSSGEVSNLFARDEIDEINSDLTPIMKKEHPRRPPTNDNLYEYFMSRVRGNLHIVLCFSPVGEKFRNRALKFPALISGCTIDWFSRWPKDALVAVSEHFLSSYTIDCTAEIKKELVQCMGSFQDGVAEKCADYFQRFRRSTHVTPKSYLSFIQGYKFIYEEKHMEVQSLANRMNTGLEKLKEASESVAALSKELAGKEKELQVANEKADTVLKEVTMKAQAAEKVKAEVQKVKDKAQAIVDSISKDKAIAEEKLEAAKPALEEAEAALQTIKPSDIATVRTLGRPPHLIMRIMDCVLLLFQRRVNAVKIDVDKGCTMPSWQESLKLMTAGNFLQNLQQFPKDTINEEVIEFLNPYFEMSDYNIETAKRVCGNVAGLCSWTKAMASFFSINKEVLPLKANLIVQENRHILAMQDLQKAQAELDAKQAELDVVQAEYEQAMAEKQTLLEDADRCRHKMQTASTLISGLAGEKERWTEQSKEFAAQTKRLVGDVLLATAFLSYSGPFNQEFRDLLLHDWKKEMKARKIPFGNGLNLNEMLIDAPTISEWNLQGLPNDDLSIQNGIIVTKASRYPLLIDPQTQGKIWIKNKESQNELQITSLNHKYFRNHLEDSLSLGRPLLIEDVGEELDPALDNVLEKNFIKTGSTFKVKVGDKEVDVMDGFKLYITTKLPNPAYTPEISARTSIIDFTVTVKGLEDQLLGRVILTEKQELEKERTHLLEDVTANKRRMKELEDNLLYRLTSTQGSLVEDESLIIVLSNTKKTAEEVTQKLEISGETEIQINSAREEYRPVATRGSILYFLITEMRLVNEMYQTSLRQFLGLFDLSLARSVKSPITSKRIANIIEHMTYEVFKYAARGLYEEHKFLFTLLLTLKIDIQRNLVKHEEFLTLIKGGASLDLKACPPKPSKWILDMTWLNLVELSKLKQFSDILDQISRNEKMWRVWFDKENPEEEPLPNAYDKSLDCFRRLLLIRSWCPDRTIAQARKYIMDSMGENYAEGVILDLEKTWEESDPRTPLICLLSMGSDPTDSIIALGKRLKIETRYVSMGQGQEVHARKLLHQTMANGGWVLLQNCHLGLDFLDELMDVVTETETVHDTFRLWITTEVHKQFPITLLQMSIKFANEPPQGLRAGLRRTYGGVSQDLLDVSVGAQWKPMLYAVAFLHSTVQERRKFGPLGWNIPYEFNQADFNATVQFIQNHLDDMDVKKGVSWTTVRYMIGEIQYGGRVTDDYDKRLLNTFAKVWFSENMFGPDFTFYQGYNIPKCSTVDGYLQYIQSLPAYDSPEVFGLHPNADITYQSKLAKDVLDTILGIQPKDSSGGGDETREAVVARLADDMLEKLPEDYSPFEVKERLQKMGPFQPMNIFLRQEIDRMQRVLSLVRSTLTELKLAVDGTIIMSENLRDALDCMFDARIPARWKKASWVSSTLGFWFTELLERNCQFTSWVSNGRPHCFWMTGFFNPQGFLTAMRQEITRANKGWALDNMVLCNEVTKFMKDDISAPPTEGVYVYGLYLEGAGWDKRNMKLIESKPKVLFELMPVIRIFAENNTARDPRLYCCPIYKKPVRTDLNYIAAVDLKTAQAPEHWVLRGVALLCDVK.

The stem stretch occupies residues 1-1938 (MFRIGRRQLW…MIHITDVAFI (1938 aa)). Coiled-coil stretches lie at residues 260 to 305 (WIKQ…DQLK) and 803 to 825 (LENA…DLIE). A disordered region spans residues 901–921 (VCHENASPSGNTSGRREGHSE). Coiled-coil stretches lie at residues 1065-1094 (AVKN…SINL) and 1433-1462 (DVNI…DWQA). AAA regions lie at residues 1939–2161 (YQNE…VLRT), 2221–2440 (TAIS…IQNL), 2547–2800 (VYPP…IWQG), and 2913–3167 (LYNE…FRRS). Residues 1977–1984 (GPAGTGKT) and 2259–2266 (GPSGSGKT) each bind ATP. A stalk region spans residues 3182–3479 (YKFIYEEKHM…QTLLEDADRC (298 aa)). Coiled-coil stretches lie at residues 3186–3299 (YEEK…QTIK), 3423–3490 (LKAN…STLI), and 3729–3814 (ILTE…EEYR). AAA stretches follow at residues 3564-3794 (LIDA…EVTQ) and 4009-4223 (ARKY…FIQN). A coiled-coil region spans residues 4389–4417 (FLRQEIDRMQRVLSLVRSTLTELKLAVDG).

This sequence belongs to the dynein heavy chain family. As to quaternary structure, interacts with DNAL1. Consists of at least two heavy chains and a number of intermediate and light chains. As to expression, strongly expressed in lung and kidney and weaker expression seen in brain, heart and testis. In the brain, expressed in ependymal cells lining the brain ventricles and the aqueduct.

The protein localises to the cytoplasm. The protein resides in the cytoskeleton. Its subcellular location is the cilium axoneme. Functionally, force generating protein of respiratory cilia. Produces force towards the minus ends of microtubules. Dynein has ATPase activity; the force-producing power stroke is thought to occur on release of ADP. Required for structural and functional integrity of the cilia of ependymal cells lining the brain ventricles. This chain is Dynein axonemal heavy chain 5, found in Mus musculus (Mouse).